The chain runs to 192 residues: Der GTPase-activating protein YihI (192 aa).

Residues 1–80 (MSRTKKTRRI…KAAVKEVKDP (80 aa)) are disordered. Composition is skewed to basic and acidic residues over residues 9-25 (RITDIMPARKADKKPEQ), 37-48 (TRYELDAKAREE), and 65-80 (DPAEQKKAAVKEVKDP).

The protein belongs to the YihI family. Interacts with Der.

In terms of biological role, a GTPase-activating protein (GAP) that modifies Der/EngA GTPase function. May play a role in ribosome biogenesis. This chain is Der GTPase-activating protein YihI, found in Actinobacillus pleuropneumoniae serotype 7 (strain AP76).